Reading from the N-terminus, the 700-residue chain is Putative proline-rich receptor-like protein kinase PERK6 (700 aa).

Residues 1 to 180 are disordered; the sequence is MAEGQSPENS…SGGGSNSSGN (180 aa). The Extracellular portion of the chain corresponds to 1–186; sequence MAEGQSPENS…SSGNNEPNTA (186 aa). Composition is skewed to pro residues over residues 9–19 and 29–47; these read NSPPSPTPPSP and SPPPSDSSSPSPPAPPPPD. Over residues 48–137 the composition is skewed to low complexity; the sequence is DSSNGSPQPP…GNNNDNNNQN (90 aa). A glycan (N-linked (GlcNAc...) asparagine) is linked at Asn176. Residues 187 to 207 form a helical membrane-spanning segment; the sequence is AIVGIVAGAGLLFLVMILFCV. Over 208-700 the chain is Cytoplasmic; sequence CCCRKKKKKH…NNKTTPSRDH (493 aa). The interval 249-315 is disordered; the sequence is NLSQQYPGSN…GPSVPPPHPS (67 aa). Residues 255–265 show a composition bias toward low complexity; that stretch reads PGSNGNNNWMN. Over residues 266-286 the composition is skewed to pro residues; it reads SPPPPPPGSWQPSPPPPPPPV. The residue at position 326 (Thr326) is a Phosphothreonine. The Protein kinase domain occupies 337–615; it reads FSQSRLLGQG…VRALEGDATL (279 aa). Residues 343–351 and Lys365 each bind ATP; that span reads LGQGGFGYV. Position 410 is a phosphotyrosine (Tyr410). The active-site Proton acceptor is the Asp461. 2 positions are modified to phosphoserine: Ser465 and Ser494. Residues Thr495 and Thr500 each carry the phosphothreonine modification. Phosphotyrosine is present on Tyr508. 2 disordered regions span residues 616–642 and 659–700; these read DDLSEGGKAGQSSFLGRGSSSDYDSST and EYGA…SRDH. Residues 689–700 are compositionally biased toward polar residues; sequence ANNNKTTPSRDH.

The protein belongs to the protein kinase superfamily. Ser/Thr protein kinase family. Mostly expressed in flower buds.

It localises to the cell membrane. The catalysed reaction is L-seryl-[protein] + ATP = O-phospho-L-seryl-[protein] + ADP + H(+). The enzyme catalyses L-threonyl-[protein] + ATP = O-phospho-L-threonyl-[protein] + ADP + H(+). This chain is Putative proline-rich receptor-like protein kinase PERK6 (PERK6), found in Arabidopsis thaliana (Mouse-ear cress).